The sequence spans 667 residues: MADLSSRVNELHDLLNQYSYEYYVEDNPSVPDSEYDKLLHELIKIEEEHPEYKTVDSPTVRVGGEAQASFNKVNHDTPMLSLGNAFNEDDLRKFDQRIREQIGNVEYMCELKIDGLAVSLKYVDGYFVQGLTRGDGTTGEDITENLKTIHAIPLKMKEPLNVEVRGEAYMPRRSFLRLNEEKEKNDEQLFANPRNAAAGSLRQLDSKLTAKRKLSVFIYSVNDFTDFNARSQSEALDELDKLGFTTNKNRARVNNIDGVLEYIEKWTSQRESLPYDIDGIVIKVNDLDQQDEMGFTQKSPRWAIAYKFPAEEVVTKLLDIELSIGRTGVVTPTAILEPVKVAGTTVSRASLHNEDLIHDRDIRIGDSVVVKKAGDIIPEVVRSIPERRPEDAVTYHMPTHCPSCGHELVRIEGEVALRCINPKCQAQLVEGLIHFVSRQAMNIDGLGTKIIQQLYQSELIKDVADIFYLTEEDLLPLDRMGQKKVDNLLAAIQQAKDNSLENLLFGLGIRHLGVKASQVLAEKYETIDRLLTVTEAELVEIHDIGDKVAQSVVTYLENEDIRALIQKLKDKHVNMIYKGIKTSDIEGHPEFSGKTIVLTGKLHQMTRNEASKWLASQGAKVTSSVTKNTDVVIAGEDAGSKLTKAQSLGIEIWTEQQFVDKQNELNS.

Residues 32–36 (DSEYD), 81–82 (SL), and E110 contribute to the NAD(+) site. K112 acts as the N6-AMP-lysine intermediate in catalysis. R133, E167, K283, and K307 together coordinate NAD(+). Positions 401, 404, 419, and 424 each coordinate Zn(2+). Positions 586–667 (EGHPEFSGKT…FVDKQNELNS (82 aa)) constitute a BRCT domain.

The protein belongs to the NAD-dependent DNA ligase family. LigA subfamily. Requires Mg(2+) as cofactor. Mn(2+) serves as cofactor.

It catalyses the reaction NAD(+) + (deoxyribonucleotide)n-3'-hydroxyl + 5'-phospho-(deoxyribonucleotide)m = (deoxyribonucleotide)n+m + AMP + beta-nicotinamide D-nucleotide.. Its function is as follows. DNA ligase that catalyzes the formation of phosphodiester linkages between 5'-phosphoryl and 3'-hydroxyl groups in double-stranded DNA using NAD as a coenzyme and as the energy source for the reaction. It is essential for DNA replication and repair of damaged DNA. The polypeptide is DNA ligase (Staphylococcus aureus (strain USA300)).